Consider the following 365-residue polypeptide: Transcription factor aptf-1 (365 aa).

Disordered regions lie at residues 13–40 (EFVRGSQCDEEDEEEQQRQSSQRPPFYE) and 93–126 (TPPQQQQQQGTGGSGEEDYCIPKSEDRDHSSNYS). An H-S-H (helix-span-helix), dimerization region spans residues 223–356 (RRKQANVTAW…MIDESIKYID (134 aa)).

Belongs to the AP-2 family. As to quaternary structure, binds DNA as a dimer. In terms of tissue distribution, expressed in five interneurons AIB, RIB and RIS.

The protein localises to the nucleus. In terms of biological role, transcription factor, which is required in the single sleep-active ring interneuron RIS for sleep-like behavioral quiescence induced by neuropeptide signaling in larvae. Regulates gene expression of sleep-inducing FMRFamide-like neuropeptide flp-11 in RIS. The polypeptide is Transcription factor aptf-1 (Caenorhabditis elegans).